The primary structure comprises 316 residues: 2,3-dihydroxyphenylpropionate/2,3-dihydroxicinnamic acid 1,2-dioxygenase (316 aa).

Catalysis depends on His-115, which acts as the Proton donor. Residue His-179 is the Proton acceptor of the active site.

The protein belongs to the LigB/MhpB extradiol dioxygenase family. In terms of assembly, homotetramer. It depends on Fe(2+) as a cofactor.

The catalysed reaction is 3-(2,3-dihydroxyphenyl)propanoate + O2 = (2Z,4E)-2-hydroxy-6-oxonona-2,4-dienedioate + H(+). The enzyme catalyses (2E)-3-(2,3-dihydroxyphenyl)prop-2-enoate + O2 = (2Z,4E,7E)-2-hydroxy-6-oxonona-2,4,7-trienedioate + H(+). Its pathway is aromatic compound metabolism; 3-phenylpropanoate degradation. Catalyzes the non-heme iron(II)-dependent oxidative cleavage of 2,3-dihydroxyphenylpropionic acid and 2,3-dihydroxicinnamic acid into 2-hydroxy-6-ketononadienedioate and 2-hydroxy-6-ketononatrienedioate, respectively. In Paraburkholderia xenovorans (strain LB400), this protein is 2,3-dihydroxyphenylpropionate/2,3-dihydroxicinnamic acid 1,2-dioxygenase.